Consider the following 214-residue polypeptide: Octanoyltransferase (214 aa).

One can recognise a BPL/LPL catalytic domain in the interval 28-210; that stretch reads GTAEDALYLL…EFGKVFTDTA (183 aa). Residues 73–80, 140–142, and 153–155 contribute to the substrate site; these read RGGNITCH, SIG, and GLS. C171 serves as the catalytic Acyl-thioester intermediate.

Belongs to the LipB family.

The protein localises to the cytoplasm. It carries out the reaction octanoyl-[ACP] + L-lysyl-[protein] = N(6)-octanoyl-L-lysyl-[protein] + holo-[ACP] + H(+). The protein operates within protein modification; protein lipoylation via endogenous pathway; protein N(6)-(lipoyl)lysine from octanoyl-[acyl-carrier-protein]: step 1/2. In terms of biological role, catalyzes the transfer of endogenously produced octanoic acid from octanoyl-acyl-carrier-protein onto the lipoyl domains of lipoate-dependent enzymes. Lipoyl-ACP can also act as a substrate although octanoyl-ACP is likely to be the physiological substrate. In Maridesulfovibrio salexigens (strain ATCC 14822 / DSM 2638 / NCIMB 8403 / VKM B-1763) (Desulfovibrio salexigens), this protein is Octanoyltransferase.